The primary structure comprises 1009 residues: Putative receptor-like protein 8 (1009 aa).

The N-terminal stretch at 1-22 (MKTNFVILLLLLCVFAISPSQQ) is a signal peptide. The Extracellular portion of the chain corresponds to 23–961 (EEINQHNPGI…EEDDEAPVDM (939 aa)). N-linked (GlcNAc...) asparagine glycosylation is found at asparagine 159 and asparagine 197. An LRR 1; degenerate repeat occupies 204–231 (FEEVRSLELSAGLNGFVDNVEGYKSLRK). LRR repeat units follow at residues 232–255 (LKNLEILDLSYNNRFNNNILPFIN), 257–281 (ATSLTSLSLQNNSMEGPFPFEEIKD), 282–305 (LTNLKLLDLSRNILKGPMQGLTHL), 306–329 (KKLKALDLSNNVFSSIMELQVVCE), 331–354 (KNLWELDLRENKFVGQLPLCLGRL), 355–377 (NKLRVLDLSSNQLNGNLPSTFNR), 379–402 (ESLEYLSLLDNNFTGFFSFDPLAN), 404–427 (TKLKVFKLSSTSDMLQIKTESEPK), 442–465 (LEKIPSFLLQDNLFTIFQMPATIV), 466–490 (HELQFLDFSVNDISGLLPDNIGYAL), 492–514 (NLLRMNGSRNGFQGHLPSSMGEM), 515–538 (VNITSLDLSYNNFSGKLPRRFVTG), 540–565 (FSLKHLKLSHNNFSGHFLPRETSFTS), 567–587 (EELRVDSNSFTGKIGVGLLSS), 588–612 (NTTLSVLDMSNNFLTGDIPSWMSNL), 613–636 (SGLTILSISNNFLEGTIPPSLLAI), 638–660 (FLSLIDLSGNLLSGSLPSRVGGE), 662–681 (GIKLFLHDNMLTGPIPDTLL), 682–705 (EKVQILDLRYNQLSGSIPQFVNTE), 707–728 (IYILLMKGNNLTGSMSRQLCDL), 729–752 (RNIRLLDLSDNKLNGFIPSCLYNL), 819–842 (LDYMYGMDLSSNELSGVIPAELGS), 843–866 (LSKLRVMNLSCNFLSSSIPSSFSN), 867–891 (LKDIESLDLSHNMLQGSIPQQLTNL), and 893–916 (SLVVFDVSYNNLSGIIPQGRQFNT). Asparagine 267 is a glycosylation site (N-linked (GlcNAc...) asparagine). N-linked (GlcNAc...) asparagine glycans are attached at residues asparagine 390 and asparagine 402. Asparagine 497, asparagine 516, asparagine 526, and asparagine 551 each carry an N-linked (GlcNAc...) asparagine glycan. 2 N-linked (GlcNAc...) asparagine glycosylation sites follow: asparagine 588 and asparagine 611. N-linked (GlcNAc...) asparagine glycans are attached at residues asparagine 716 and asparagine 751. N-linked (GlcNAc...) asparagine glycans are attached at residues asparagine 850, asparagine 890, asparagine 903, and asparagine 934. Residues 934 to 955 (NRSCDAKKTSDESENGGEEEDD) are disordered. Residues 945 to 955 (ESENGGEEEDD) show a composition bias toward acidic residues. The chain crosses the membrane as a helical span at residues 962–982 (LAFYFSSASTYVTTLIGIFIL). The Cytoplasmic portion of the chain corresponds to 983-1009 (MCFDCPLRRAWLRIVDASIASVKSMLP).

The protein belongs to the RLP family.

Its subcellular location is the cell membrane. The protein is Putative receptor-like protein 8 of Arabidopsis thaliana (Mouse-ear cress).